The primary structure comprises 238 residues: Enolase-phosphatase E1 (238 aa).

Mg(2+)-binding residues include Asp14 and Glu16. Residues 128–129 (SS) and Lys165 contribute to the substrate site. Residue Asp192 participates in Mg(2+) binding.

Belongs to the HAD-like hydrolase superfamily. MasA/MtnC family. Monomer. It depends on Mg(2+) as a cofactor.

It localises to the cytoplasm. The protein resides in the nucleus. The enzyme catalyses 5-methylsulfanyl-2,3-dioxopentyl phosphate + H2O = 1,2-dihydroxy-5-(methylsulfanyl)pent-1-en-3-one + phosphate. It functions in the pathway amino-acid biosynthesis; L-methionine biosynthesis via salvage pathway; L-methionine from S-methyl-5-thio-alpha-D-ribose 1-phosphate: step 3/6. The protein operates within amino-acid biosynthesis; L-methionine biosynthesis via salvage pathway; L-methionine from S-methyl-5-thio-alpha-D-ribose 1-phosphate: step 4/6. Bifunctional enzyme that catalyzes the enolization of 2,3-diketo-5-methylthiopentyl-1-phosphate (DK-MTP-1-P) into the intermediate 2-hydroxy-3-keto-5-methylthiopentenyl-1-phosphate (HK-MTPenyl-1-P), which is then dephosphorylated to form the acireductone 1,2-dihydroxy-3-keto-5-methylthiopentene (DHK-MTPene). The polypeptide is Enolase-phosphatase E1 (Fusarium vanettenii (strain ATCC MYA-4622 / CBS 123669 / FGSC 9596 / NRRL 45880 / 77-13-4) (Fusarium solani subsp. pisi)).